Reading from the N-terminus, the 194-residue chain is MREGLVTRNTKETQINVKISLDGKGDCQANTGIGFFDHMLVLFTKHGLMDAYFDVKGDLHVDSHHTIEDTGIAMGLAIRQALGDKKSIRRYGTAYVPMDEALVLVSLDLSDRPYLVFDAQFSQPMVGQMDTQMVEEFFRAVAFNAGITLHIKVLHGSNCHHIIEAMFKAFGRAIDDATRLDTRIEGVLSTKGTL.

Belongs to the imidazoleglycerol-phosphate dehydratase family.

It localises to the cytoplasm. It catalyses the reaction D-erythro-1-(imidazol-4-yl)glycerol 3-phosphate = 3-(imidazol-4-yl)-2-oxopropyl phosphate + H2O. Its pathway is amino-acid biosynthesis; L-histidine biosynthesis; L-histidine from 5-phospho-alpha-D-ribose 1-diphosphate: step 6/9. The polypeptide is Imidazoleglycerol-phosphate dehydratase (Ruminiclostridium cellulolyticum (strain ATCC 35319 / DSM 5812 / JCM 6584 / H10) (Clostridium cellulolyticum)).